A 166-amino-acid polypeptide reads, in one-letter code: Interferon gamma-related (166 aa).

A signal peptide spans 1 to 26 (MYCRLNMVYLICALLLIVSLQGTVGA). N91 carries N-linked (GlcNAc...) asparagine glycosylation.

The protein belongs to the type II (or gamma) interferon family. In terms of assembly, homodimer. As to expression, strongly expressed in spleen. Also detected at lower levels in gill, kidney, heart, brain and intestine. In immune cell populations, expressed at highest levels in peripheral blood leukocytes and at lower levels in splenocytes, granulocytes, monocytes and macrophages.

The protein resides in the secreted. Its function is as follows. Cytokine which binds to interferon gamma receptor 1 (ifngr1). Has activating effects on primary macrophages. Induces nitric oxide production and phagocytic responses in macrophages. Primes monocytes for production of reactive oxygen intermediates (ROI), although the effect is short-lived. Also has inhibitory effects on monocyte priming by ifng1 (interferon gamma 1) and tnfb (TNF-alpha 2). Stimulates phosphorylation of the JAK/STAT signal transducer stat1, but fails to induce stat1 nuclear localization. Promotes increased expression of a number of genes important for macrophage activity, including the interferon regulatory factors irf2 and irf9. This is Interferon gamma-related from Carassius auratus (Goldfish).